A 95-amino-acid polypeptide reads, in one-letter code: MQIDDKLLTKLEKLSALKIADDKRQELEEQLSQIVNFVEKLDELKLDDVEAMTSTTNTATPFRLDESRKSDVIDMVSKHAPNSQDGFFIVPKIIE.

It belongs to the GatC family. As to quaternary structure, heterotrimer of A, B and C subunits.

It carries out the reaction L-glutamyl-tRNA(Gln) + L-glutamine + ATP + H2O = L-glutaminyl-tRNA(Gln) + L-glutamate + ADP + phosphate + H(+). The enzyme catalyses L-aspartyl-tRNA(Asn) + L-glutamine + ATP + H2O = L-asparaginyl-tRNA(Asn) + L-glutamate + ADP + phosphate + 2 H(+). Its function is as follows. Allows the formation of correctly charged Asn-tRNA(Asn) or Gln-tRNA(Gln) through the transamidation of misacylated Asp-tRNA(Asn) or Glu-tRNA(Gln) in organisms which lack either or both of asparaginyl-tRNA or glutaminyl-tRNA synthetases. The reaction takes place in the presence of glutamine and ATP through an activated phospho-Asp-tRNA(Asn) or phospho-Glu-tRNA(Gln). The sequence is that of Aspartyl/glutamyl-tRNA(Asn/Gln) amidotransferase subunit C from Campylobacter lari (strain RM2100 / D67 / ATCC BAA-1060).